Consider the following 493-residue polypeptide: Glycerol kinase (493 aa).

Threonine 12 contributes to the ADP binding site. The ATP site is built by threonine 12, threonine 13, and serine 14. Residue threonine 12 coordinates sn-glycerol 3-phosphate. An ADP-binding site is contributed by arginine 16. Sn-glycerol 3-phosphate contacts are provided by arginine 82, glutamate 83, tyrosine 132, and aspartate 239. Glycerol contacts are provided by arginine 82, glutamate 83, tyrosine 132, aspartate 239, and glutamine 240. Positions 261 and 303 each coordinate ADP. The ATP site is built by threonine 261, glycine 303, glutamine 307, and glycine 402. ADP-binding residues include glycine 402 and asparagine 406.

The protein belongs to the FGGY kinase family.

It catalyses the reaction glycerol + ATP = sn-glycerol 3-phosphate + ADP + H(+). It functions in the pathway polyol metabolism; glycerol degradation via glycerol kinase pathway; sn-glycerol 3-phosphate from glycerol: step 1/1. Key enzyme in the regulation of glycerol uptake and metabolism. Catalyzes the phosphorylation of glycerol to yield sn-glycerol 3-phosphate. This Thermococcus onnurineus (strain NA1) protein is Glycerol kinase.